A 324-amino-acid polypeptide reads, in one-letter code: D-erythronate dehydrogenase (324 aa).

NAD(+)-binding residues include S125, Y149, and K153. The active-site Proton acceptor is the Y149.

It belongs to the NAD(P)-dependent epimerase/dehydratase family.

It catalyses the reaction D-erythronate + NAD(+) = 2-dehydro-D-erythronate + NADH + H(+). Functionally, catalyzes oxidation of D-erythronate to 2-oxo-tetronate. Can use either NAD(+) or NADP(+) as cosubstrate, with a preference for NAD(+). This chain is D-erythronate dehydrogenase, found in Cupriavidus necator (strain ATCC 17699 / DSM 428 / KCTC 22496 / NCIMB 10442 / H16 / Stanier 337) (Ralstonia eutropha).